A 347-amino-acid polypeptide reads, in one-letter code: MDINEKAPGPSGRRPARRRDGGGQVLVLYLAIAVVVAVLAWPWLAPRLGSFPGSLLSWIGDGGSVGAPRPATLDERMDMVEAALAPLAMRIAEADRRLAMLEANPRTAGEDPRKEAAGVSADPEQMSWMAAEIATLKGDLEIVRKLAADEGGATKLSGAVEKAEAAFRRIAERRDRAPLFLAALGQLREAVDRGSPYPAQMKAAMILAEKGTADKLAPLVMGSATGIVTRVGLAESFRVTAAAARKLDVPADSGWVPPNIRRWLGGAVLIRRTEGGEEGLDGILNSTSRLLAGGDLAGAAALLRRAEGPSLAAIQPWLEAAELRLSADAALSELSAMAMTVASSRDE.

A helical membrane pass occupies residues 25–45 (VLVLYLAIAVVVAVLAWPWLA).

It localises to the magnetosome membrane. Functionally, the 4 genes of this operon collectively influence magnetosome size and number. This chain is Probable magnetosome protein Mms36, found in Magnetospirillum gryphiswaldense (strain DSM 6361 / JCM 21280 / NBRC 15271 / MSR-1).